Reading from the N-terminus, the 100-residue chain is Urease subunit gamma (100 aa).

This sequence belongs to the urease gamma subunit family. In terms of assembly, heterotrimer of UreA (gamma), UreB (beta) and UreC (alpha) subunits. Three heterotrimers associate to form the active enzyme.

It localises to the cytoplasm. The enzyme catalyses urea + 2 H2O + H(+) = hydrogencarbonate + 2 NH4(+). It functions in the pathway nitrogen metabolism; urea degradation; CO(2) and NH(3) from urea (urease route): step 1/1. This Corynebacterium efficiens (strain DSM 44549 / YS-314 / AJ 12310 / JCM 11189 / NBRC 100395) protein is Urease subunit gamma.